A 267-amino-acid chain; its full sequence is Exosome complex component Rrp42 (267 aa).

This sequence belongs to the RNase PH family. Rrp42 subfamily. In terms of assembly, component of the archaeal exosome complex. Forms a hexameric ring-like arrangement composed of 3 Rrp41-Rrp42 heterodimers. The hexameric ring associates with a trimer of Rrp4 and/or Csl4 subunits.

It is found in the cytoplasm. Its function is as follows. Non-catalytic component of the exosome, which is a complex involved in RNA degradation. Contributes to the structuring of the Rrp41 active site. The protein is Exosome complex component Rrp42 of Methanopyrus kandleri (strain AV19 / DSM 6324 / JCM 9639 / NBRC 100938).